A 202-amino-acid polypeptide reads, in one-letter code: Probable nicotinate-nucleotide adenylyltransferase (202 aa).

This sequence belongs to the NadD family.

The catalysed reaction is nicotinate beta-D-ribonucleotide + ATP + H(+) = deamido-NAD(+) + diphosphate. It functions in the pathway cofactor biosynthesis; NAD(+) biosynthesis; deamido-NAD(+) from nicotinate D-ribonucleotide: step 1/1. Functionally, catalyzes the reversible adenylation of nicotinate mononucleotide (NaMN) to nicotinic acid adenine dinucleotide (NaAD). The chain is Probable nicotinate-nucleotide adenylyltransferase from Synechococcus sp. (strain JA-2-3B'a(2-13)) (Cyanobacteria bacterium Yellowstone B-Prime).